Consider the following 599-residue polypeptide: THO complex subunit 1 (599 aa).

Disordered regions lie at residues 376 to 395 (EKQPIDKKSPNAGQKKRRQR) and 497 to 599 (KYQA…MPVS). The segment covering 502–522 (PNEKAKRAKKEETKGGSHETE) has biased composition (basic and acidic residues). A compositionally biased stretch (acidic residues) spans 575–585 (QIEDGETEEAG).

Component of the THO complex, which is composed of THO1, THO2, THO3, THO5, THO6 and THO7.

Its subcellular location is the nucleus. In terms of biological role, acts as a component of the THO subcomplex of the TREX complex which is thought to couple mRNA transcription, processing and nuclear export. Contributes to the integrity of the endogenous trans-acting small interfering RNA (ta-siRNA) pathway. May process or transport a long RNA molecule so that it can be a template for secondary siRNA production. May participate in the trafficking of siRNA precursors to the ARGONAUTE catalytic center. Required for the generation of functional messenger ribonucleoproteins (mRNPs). Plays an important roles in plant innate immunity. The protein is THO complex subunit 1 (THO1) of Arabidopsis thaliana (Mouse-ear cress).